The following is a 356-amino-acid chain: uncharacterized protein (356 aa).

The first 21 residues, 1–21 (MKLITAPCRALLALPFCYAFS), serve as a signal peptide directing secretion.

This is an uncharacterized protein from Escherichia coli (strain K12).